The following is a 222-amino-acid chain: Type II restriction enzyme MjaI (222 aa).

It carries out the reaction Endonucleolytic cleavage of DNA to give specific double-stranded fragments with terminal 5'-phosphates.. Functionally, a P subtype restriction enzyme that recognizes the double-stranded sequence 5'-CTAG-3'; the cleavage site is unknown. This Methanocaldococcus jannaschii (strain ATCC 43067 / DSM 2661 / JAL-1 / JCM 10045 / NBRC 100440) (Methanococcus jannaschii) protein is Type II restriction enzyme MjaI (mjaIR).